The sequence spans 271 residues: Large ribosomal subunit protein uL15c (271 aa).

Disordered stretches follow at residues 1 to 21 and 66 to 120; these read MASL…NNYP and SNVS…QKSR. The N-terminal 61 residues, 1–61, are a transit peptide targeting the chloroplast; that stretch reads MASLLSLSST…KESTRLVVVA (61 aa). Positions 66–76 are enriched in low complexity; the sequence is SNVSPSIGSGS. A compositionally biased stretch (basic residues) spans 91–101; that stretch reads SRKKGKRKGRG. The segment covering 102–114 has biased composition (gly residues); the sequence is HAAGQGGSCGFGM.

In terms of assembly, component of the chloroplast large ribosomal subunit (LSU). Mature 70S chloroplast ribosomes of higher plants consist of a small (30S) and a large (50S) subunit. The 30S small subunit contains 1 molecule of ribosomal RNA (16S rRNA) and 24 different proteins. The 50S large subunit contains 3 rRNA molecules (23S, 5S and 4.5S rRNA) and 33 different proteins.

The protein localises to the plastid. It localises to the chloroplast. Component of the chloroplast ribosome (chloro-ribosome), a dedicated translation machinery responsible for the synthesis of chloroplast genome-encoded proteins, including proteins of the transcription and translation machinery and components of the photosynthetic apparatus. The polypeptide is Large ribosomal subunit protein uL15c (RPL15) (Spinacia oleracea (Spinach)).